The primary structure comprises 174 residues: Probable inosine/xanthosine triphosphatase (174 aa).

Asp-63 is a Mg(2+) binding site.

Belongs to the YjjX NTPase family. Homodimer. Mg(2+) serves as cofactor. Mn(2+) is required as a cofactor.

It carries out the reaction XTP + H2O = XDP + phosphate + H(+). It catalyses the reaction ITP + H2O = IDP + phosphate + H(+). Its function is as follows. Phosphatase that hydrolyzes non-canonical purine nucleotides such as XTP and ITP to their respective diphosphate derivatives. Probably excludes non-canonical purines from DNA/RNA precursor pool, thus preventing their incorporation into DNA/RNA and avoiding chromosomal lesions. The polypeptide is Probable inosine/xanthosine triphosphatase (Methanocella arvoryzae (strain DSM 22066 / NBRC 105507 / MRE50)).